Consider the following 362-residue polypeptide: Aminomethyltransferase (362 aa).

The protein belongs to the GcvT family. In terms of assembly, the glycine cleavage system is composed of four proteins: P, T, L and H.

It catalyses the reaction N(6)-[(R)-S(8)-aminomethyldihydrolipoyl]-L-lysyl-[protein] + (6S)-5,6,7,8-tetrahydrofolate = N(6)-[(R)-dihydrolipoyl]-L-lysyl-[protein] + (6R)-5,10-methylene-5,6,7,8-tetrahydrofolate + NH4(+). In terms of biological role, the glycine cleavage system catalyzes the degradation of glycine. The protein is Aminomethyltransferase of Listeria monocytogenes serotype 4a (strain HCC23).